The primary structure comprises 123 residues: Small ribosomal subunit protein uS12 (123 aa).

The interval 9-28 (RNGRKRATKKTTTPALKGAP) is disordered. Residues 18–27 (KTTTPALKGA) are compositionally biased toward low complexity. D89 carries the post-translational modification 3-methylthioaspartic acid.

This sequence belongs to the universal ribosomal protein uS12 family. In terms of assembly, part of the 30S ribosomal subunit. Contacts proteins S8 and S17. May interact with IF1 in the 30S initiation complex.

Its function is as follows. With S4 and S5 plays an important role in translational accuracy. Interacts with and stabilizes bases of the 16S rRNA that are involved in tRNA selection in the A site and with the mRNA backbone. Located at the interface of the 30S and 50S subunits, it traverses the body of the 30S subunit contacting proteins on the other side and probably holding the rRNA structure together. The combined cluster of proteins S8, S12 and S17 appears to hold together the shoulder and platform of the 30S subunit. The polypeptide is Small ribosomal subunit protein uS12 (Desulfosudis oleivorans (strain DSM 6200 / JCM 39069 / Hxd3) (Desulfococcus oleovorans)).